We begin with the raw amino-acid sequence, 110 residues long: Large ribosomal subunit protein uL22 (110 aa).

The protein belongs to the universal ribosomal protein uL22 family. As to quaternary structure, part of the 50S ribosomal subunit.

In terms of biological role, this protein binds specifically to 23S rRNA; its binding is stimulated by other ribosomal proteins, e.g. L4, L17, and L20. It is important during the early stages of 50S assembly. It makes multiple contacts with different domains of the 23S rRNA in the assembled 50S subunit and ribosome. The globular domain of the protein is located near the polypeptide exit tunnel on the outside of the subunit, while an extended beta-hairpin is found that lines the wall of the exit tunnel in the center of the 70S ribosome. This Yersinia pseudotuberculosis serotype O:1b (strain IP 31758) protein is Large ribosomal subunit protein uL22.